The primary structure comprises 798 residues: Cold shock domain-containing protein E1 (798 aa).

The CSD 1 domain maps to 26–87 (ETGVIEKLLT…RTGKPIAIKL (62 aa)). The residue at position 81 (K81) is an N6-acetyllysine. Residue K91 forms a Glycyl lysine isopeptide (Lys-Gly) (interchain with G-Cter in SUMO2) linkage. S123 bears the Phosphoserine mark. In terms of domain architecture, CSD 2; truncated spans 136 to 179 (VFYLTYTSEDVEGNVQLETGDKINFVIDNNKHTGAVSARNIMLL). Residues 186–245 (YQGVVCAMKEAFGFIERGDVVKEIFFHYSEFKGDLETLQPGDDVEFTIKDRNGKEVATDV) form the CSD 3 domain. S276 carries the phosphoserine modification. One can recognise a CSD 4; truncated domain in the interval 297 to 337 (LPFGDKDTKSKVTLLEGDHVRFNISTDRRDKLERATNIEVL). 2 CSD domains span residues 349–410 (EMGV…AIRI) and 447–507 (NKGK…ATCV). At S514 the chain carries Phosphoserine. The CSD 7 domain maps to 519–579 (LLGYVATLKD…KGNKVSAEKV (61 aa)). S584 is modified (phosphoserine). CSD domains are found at residues 610–670 (PTQI…AYNI) and 674–735 (RRAT…ACNV). The region spanning 748–789 (PRPDRLVNRLKNITLDDASAPRLMVLRQPRGPDNSMGFGAER) is the SUZ-C domain. T761 bears the Phosphothreonine mark.

Belongs to the UNR family. Component of a multi subunit autoregulatory ribonucleoprotein complex (ARC), at least composed of IGF2BP1, PABPC1 and CSDE1. Interacts with STRAP. Part of a complex associated with the FOS mCRD domain and consisting of PABPC1, PAIP1, HNRPD and SYNCRIP. The interaction with PABPC1 is direct and RNA-independent. Interacts with EIF4ENIF1/4E-T.

It is found in the cytoplasm. Its subcellular location is the stress granule. The protein resides in the P-body. In terms of biological role, RNA-binding protein involved in translationally coupled mRNA turnover. Implicated with other RNA-binding proteins in the cytoplasmic deadenylation/translational and decay interplay of the FOS mRNA mediated by the major coding-region determinant of instability (mCRD) domain. Required for efficient formation of stress granules. The protein is Cold shock domain-containing protein E1 of Rattus norvegicus (Rat).